We begin with the raw amino-acid sequence, 476 residues long: Transmembrane transporter FPSE_08127 (476 aa).

A helical membrane pass occupies residues isoleucine 72–isoleucine 92. N-linked (GlcNAc...) asparagine glycosylation is present at asparagine 111. A run of 9 helical transmembrane segments spans residues leucine 133–isoleucine 153, glycine 164–isoleucine 184, tryptophan 192–valine 212, tryptophan 231–isoleucine 251, alanine 275–tyrosine 295, valine 317–alanine 337, leucine 364–leucine 384, leucine 387–leucine 407, and leucine 431–isoleucine 451.

It belongs to the amino acid/polyamine transporter 2 family.

It localises to the membrane. In terms of biological role, transmembrane transporter; part of the Fusarium detoxification of benzoxazolinone cluster involved in the degradation of benzoxazolinones produced by the host plant. Maize, wheat, and rye produce the 2 benzoxazinone phytoanticipins 2,4-dihy-droxy-7-methoxy-1,4-benzoxazin-3-one (DIMBOA) and 2,4-dihydroxy-1,4-benzoxazin-3-one (DIBOA) that, due to their inherent instability once released, spontaneously degrade to the more stable corresponding benzoxazolinones, 6-methoxy-2-benzoxazolinone (MBOA) and 2-benzoxazolinone (BOA), respectively. FPSE_08127 is proposed to shuttle metabolites of benzoxazolinone degradation. The polypeptide is Transmembrane transporter FPSE_08127 (Fusarium pseudograminearum (strain CS3096) (Wheat and barley crown-rot fungus)).